Here is a 399-residue protein sequence, read N- to C-terminus: ASTKGPSVFPLAPSSKSTSGGTAALGCLVKDYFPEPVTVSWNSGALTSGVHTFPAVLQSSGLYSLSSVVTVPSSSLGTQTYICNVNHKPSNTKVDKKVEPKSCDKTHTCPPCPAPELLGGPSVFLFPPKPKDTLMISRTPEVTCVVVDVSHEDPEVKFNWYVDGVEVHNAKTKPREEQYNSTYRVVSVLTVLHQDWLNGKEYKCKVSNKALPAPIEKTISKAKGQPREPQVYTLPPSRDELTKNQVSLTCLVKGFYPSDIAVEWESNGQPENNYKTTPPVLDSDGSFFLYSKLTVDKSRWQQGNVFSCSVMHEALHNHYTQKSLSLSPELQLEESCAEAQDGELDGLWTTITIFITLFLLSVCYSATVTFFKVKWIFSSVVDLKQTIIPDYRNMIGQGA.

The disordered stretch occupies residues 1 to 21 (ASTKGPSVFPLAPSSKSTSGG). Residues 1–98 (ASTKGPSVFP…PSNTKVDKKV (98 aa)) form a CH1 region. The Extracellular portion of the chain corresponds to 1 to 350 (ASTKGPSVFP…DGELDGLWTT (350 aa)). 3 consecutive Ig-like domains span residues 6–99 (PSVF…KKVE), 121–220 (PSVF…KTIS), and 229–325 (PQVY…KSLS). A disulfide bridge connects residues C27 and C83. Residues 99–110 (EPKSCDKTHTCP) are hinge. A CH2 region spans residues 111–223 (PCPAPELLGG…PIEKTISKAK (113 aa)). Intrachain disulfides connect C144–C204 and C250–C308. N180 carries N-linked (GlcNAc...) (complex) asparagine glycosylation. The segment at 224-330 (GQPREPQVYT…QKSLSLSPEL (107 aa)) is CH3. A helical transmembrane segment spans residues 351 to 371 (ITIFITLFLLSVCYSATVTFF). The Cytoplasmic portion of the chain corresponds to 372–399 (KVKWIFSSVVDLKQTIIPDYRNMIGQGA).

In terms of assembly, immunoglobulins are composed of two identical heavy chains and two identical light chains; disulfide-linked. Interacts with FCGR1A; this interaction mediates IgG effector functions on monocytes. Interacts with FCGR2A and FCGR3A. Glycosylation on Asn-180 is required for interaction with Fc receptors and ability to activate the complement pathway. Post-translationally, (Microbial infection) Deglycosylation on Asn-180 by S.pyogenes EndoS or Endos2 endoglucosidases prevents interaction between immunoglobulin-gamma (IgG) and Fc receptors, impairing ability to activate the complement pathway.

It is found in the secreted. The protein localises to the cell membrane. Its function is as follows. Constant region of immunoglobulin heavy chains. Immunoglobulins, also known as antibodies, are membrane-bound or secreted glycoproteins produced by B lymphocytes. In the recognition phase of humoral immunity, the membrane-bound immunoglobulins serve as receptors which, upon binding of a specific antigen, trigger the clonal expansion and differentiation of B lymphocytes into immunoglobulins-secreting plasma cells. Secreted immunoglobulins mediate the effector phase of humoral immunity, which results in the elimination of bound antigens. The antigen binding site is formed by the variable domain of one heavy chain, together with that of its associated light chain. Thus, each immunoglobulin has two antigen binding sites with remarkable affinity for a particular antigen. The variable domains are assembled by a process called V-(D)-J rearrangement and can then be subjected to somatic hypermutations which, after exposure to antigen and selection, allow affinity maturation for a particular antigen. Mediates IgG effector functions on monocytes triggering ADCC of virus-infected cells. The polypeptide is Immunoglobulin heavy constant gamma 1 (Homo sapiens (Human)).